The following is a 447-amino-acid chain: Argininosuccinate synthase (447 aa).

Residues 17-25 (AFSGGLDTS) and A43 contribute to the ATP site. Y99 serves as a coordination point for L-citrulline. ATP is bound by residues G129 and T131. Residues T131, N135, and D136 each contribute to the L-aspartate site. Residue N135 coordinates L-citrulline. Residue D136 coordinates ATP. Residues R139 and S192 each coordinate L-citrulline. Position 194 (D194) interacts with ATP. T201, E203, and E280 together coordinate L-citrulline.

The protein belongs to the argininosuccinate synthase family. Type 2 subfamily. Homotetramer.

Its subcellular location is the cytoplasm. It carries out the reaction L-citrulline + L-aspartate + ATP = 2-(N(omega)-L-arginino)succinate + AMP + diphosphate + H(+). The protein operates within amino-acid biosynthesis; L-arginine biosynthesis; L-arginine from L-ornithine and carbamoyl phosphate: step 2/3. The polypeptide is Argininosuccinate synthase (Escherichia fergusonii (strain ATCC 35469 / DSM 13698 / CCUG 18766 / IAM 14443 / JCM 21226 / LMG 7866 / NBRC 102419 / NCTC 12128 / CDC 0568-73)).